Consider the following 618-residue polypeptide: UvrABC system protein C (618 aa).

Residues 13–92 form the GIY-YIG domain; that stretch reads DKPGVYLMKN…IKKYRPKYNI (80 aa). The UVR domain occupies 204-239; sequence LDIVENFKLNMEKAAENLEFEKAAMLRDKINIIEKI.

The protein belongs to the UvrC family. As to quaternary structure, interacts with UvrB in an incision complex.

The protein localises to the cytoplasm. Its function is as follows. The UvrABC repair system catalyzes the recognition and processing of DNA lesions. UvrC both incises the 5' and 3' sides of the lesion. The N-terminal half is responsible for the 3' incision and the C-terminal half is responsible for the 5' incision. This Clostridium botulinum (strain ATCC 19397 / Type A) protein is UvrABC system protein C.